A 546-amino-acid chain; its full sequence is 3-(3-hydroxy-phenyl)propionate/3-hydroxycinnamic acid hydroxylase 2 (546 aa).

FAD contacts are provided by residues 10–39 and 278–288; these read SVAI…VVER and FVAGRIALVGD.

The protein belongs to the PheA/TfdB FAD monooxygenase family. It depends on FAD as a cofactor.

The catalysed reaction is 3-(3-hydroxyphenyl)propanoate + NADH + O2 + H(+) = 3-(2,3-dihydroxyphenyl)propanoate + NAD(+) + H2O. It carries out the reaction (2E)-3-(3-hydroxyphenyl)prop-2-enoate + NADH + O2 + H(+) = (2E)-3-(2,3-dihydroxyphenyl)prop-2-enoate + NAD(+) + H2O. It functions in the pathway aromatic compound metabolism; 3-phenylpropanoate degradation. In terms of biological role, catalyzes the insertion of one atom of molecular oxygen into position 2 of the phenyl ring of 3-(3-hydroxyphenyl)propionate (3-HPP) and hydroxycinnamic acid (3HCI). The protein is 3-(3-hydroxy-phenyl)propionate/3-hydroxycinnamic acid hydroxylase 2 of Burkholderia vietnamiensis (strain G4 / LMG 22486) (Burkholderia cepacia (strain R1808)).